The following is a 311-amino-acid chain: Dihydroorotate dehydrogenase B (NAD(+)), catalytic subunit (311 aa).

FMN contacts are provided by residues Ser24 and 48–49; that span reads KA. Substrate-binding positions include Lys48 and 72–76; that span reads NAIGL. FMN is bound by residues Asn104 and Asn132. A substrate-binding site is contributed by Asn132. Cys135 acts as the Nucleophile in catalysis. 2 residues coordinate FMN: Lys170 and Ile196. Position 197–198 (197–198) interacts with substrate; it reads NT. FMN contacts are provided by residues Gly222, 248-249, and 270-271; these read GG and GT.

It belongs to the dihydroorotate dehydrogenase family. Type 1 subfamily. Heterotetramer of 2 PyrK and 2 PyrD type B subunits. FMN is required as a cofactor.

It localises to the cytoplasm. It catalyses the reaction (S)-dihydroorotate + NAD(+) = orotate + NADH + H(+). It functions in the pathway pyrimidine metabolism; UMP biosynthesis via de novo pathway; orotate from (S)-dihydroorotate (NAD(+) route): step 1/1. Its function is as follows. Catalyzes the conversion of dihydroorotate to orotate with NAD(+) as electron acceptor. Cannot use fumarate as an electron acceptor. This Lactococcus lactis subsp. cremoris (strain MG1363) protein is Dihydroorotate dehydrogenase B (NAD(+)), catalytic subunit (pyrDB).